A 659-amino-acid chain; its full sequence is Pesticidal crystal protein Cry3Ba (659 aa).

The segment at 1–41 (MIRMGGRKMNPNNRSEYDTIKVTPNSELPTNHNQYPLADNP) is disordered. Positions 22–41 (VTPNSELPTNHNQYPLADNP) are enriched in polar residues.

Belongs to the delta endotoxin family.

Functionally, promotes colloidosmotic lysis by binding to the midgut epithelial cells of Coleoptera. This Bacillus thuringiensis subsp. tolworthi protein is Pesticidal crystal protein Cry3Ba (cry3Ba).